A 76-amino-acid chain; its full sequence is Esculentin-2MT2 (76 aa).

The first 22 residues, 1–22 (MFTLKKSMLLLFFLGTISLSLC), serve as a signal peptide directing secretion. Residues 23-37 (EEERSADEDDGEKEV) constitute a propeptide, removed in mature form. A disulfide bridge connects residues Cys70 and Cys76.

This sequence belongs to the frog skin active peptide (FSAP) family. Esculentin subfamily. Expressed by the skin glands.

It is found in the secreted. Functionally, antimicrobial peptide. Active against a variety of Gram-negative and Gram-positive bacterial strains. Active against fungi. Shows strong hemolytic activity against human erythrocytes. The chain is Esculentin-2MT2 from Amolops mantzorum (Sichuan torrent frog).